Consider the following 249-residue polypeptide: Cytochrome c oxidase subunit 2 (249 aa).

The next 2 membrane-spanning stretches (helical) occupy residues 40-60 (NIMF…YTIT) and 81-101 (IIWT…SFIL). Cu cation is bound by residues His184, Cys219, Glu221, Cys223, His227, and Met230. Glu221 lines the Mg(2+) pocket.

This sequence belongs to the cytochrome c oxidase subunit 2 family. In terms of assembly, component of the cytochrome c oxidase (complex IV, CIV), a multisubunit enzyme composed of a catalytic core of 3 subunits and several supernumerary subunits. The complex exists as a monomer or a dimer and forms supercomplexes (SCs) in the inner mitochondrial membrane with ubiquinol-cytochrome c oxidoreductase (cytochrome b-c1 complex, complex III, CIII). Cu cation is required as a cofactor.

The protein localises to the mitochondrion inner membrane. The catalysed reaction is 4 Fe(II)-[cytochrome c] + O2 + 8 H(+)(in) = 4 Fe(III)-[cytochrome c] + 2 H2O + 4 H(+)(out). In terms of biological role, component of the cytochrome c oxidase, the last enzyme in the mitochondrial electron transport chain which drives oxidative phosphorylation. The respiratory chain contains 3 multisubunit complexes succinate dehydrogenase (complex II, CII), ubiquinol-cytochrome c oxidoreductase (cytochrome b-c1 complex, complex III, CIII) and cytochrome c oxidase (complex IV, CIV), that cooperate to transfer electrons derived from NADH and succinate to molecular oxygen, creating an electrochemical gradient over the inner membrane that drives transmembrane transport and the ATP synthase. Cytochrome c oxidase is the component of the respiratory chain that catalyzes the reduction of oxygen to water. Electrons originating from reduced cytochrome c in the intermembrane space (IMS) are transferred via the dinuclear copper A center (CU(A)) of subunit 2 and heme A of subunit 1 to the active site in subunit 1, a binuclear center (BNC) formed by heme A3 and copper B (CU(B)). The BNC reduces molecular oxygen to 2 water molecules using 4 electrons from cytochrome c in the IMS and 4 protons from the mitochondrial matrix. The protein is Cytochrome c oxidase subunit 2 (COX2) of Vanderwaltozyma polyspora (strain ATCC 22028 / DSM 70294 / BCRC 21397 / CBS 2163 / NBRC 10782 / NRRL Y-8283 / UCD 57-17) (Kluyveromyces polysporus).